We begin with the raw amino-acid sequence, 508 residues long: Pyruvate kinase (508 aa).

Arginine 56 contributes to the substrate binding site. K(+)-binding residues include asparagine 58, serine 60, aspartate 90, and threonine 91. Residue 58 to 61 coordinates ATP; the sequence is NFSH. 2 residues coordinate ATP: arginine 97 and lysine 185. Glutamate 251 contacts Mg(2+). Positions 274, 275, and 307 each coordinate substrate. Residue aspartate 275 coordinates Mg(2+).

This sequence belongs to the pyruvate kinase family. Homotetramer. The cofactor is Mg(2+). It depends on K(+) as a cofactor.

The catalysed reaction is pyruvate + ATP = phosphoenolpyruvate + ADP + H(+). It functions in the pathway carbohydrate degradation; glycolysis; pyruvate from D-glyceraldehyde 3-phosphate: step 5/5. With respect to regulation, regulated by phosphoenolpyruvate substrate and is allosterically activated by ribose-5-phosphate, AMP and other nucleoside monophosphates but not by fructose-1,6-bisphosphate. The sequence is that of Pyruvate kinase (pyk) from Mycoplasma pneumoniae (strain ATCC 29342 / M129 / Subtype 1) (Mycoplasmoides pneumoniae).